We begin with the raw amino-acid sequence, 615 residues long: DNA mismatch repair protein MutL (615 aa).

The interval 363 to 397 is disordered; the sequence is FAEPAAREPVAPRYTPAPASGSRPAAPWPNAQPGY. Positions 364–391 are enriched in low complexity; the sequence is AEPAAREPVAPRYTPAPASGSRPAAPWP.

This sequence belongs to the DNA mismatch repair MutL/HexB family.

Functionally, this protein is involved in the repair of mismatches in DNA. It is required for dam-dependent methyl-directed DNA mismatch repair. May act as a 'molecular matchmaker', a protein that promotes the formation of a stable complex between two or more DNA-binding proteins in an ATP-dependent manner without itself being part of a final effector complex. This is DNA mismatch repair protein MutL from Escherichia coli (strain K12 / MC4100 / BW2952).